The following is a 255-amino-acid chain: 5-oxoprolinase subunit A (255 aa).

The protein belongs to the LamB/PxpA family. Forms a complex composed of PxpA, PxpB and PxpC.

It catalyses the reaction 5-oxo-L-proline + ATP + 2 H2O = L-glutamate + ADP + phosphate + H(+). Its function is as follows. Catalyzes the cleavage of 5-oxoproline to form L-glutamate coupled to the hydrolysis of ATP to ADP and inorganic phosphate. The polypeptide is 5-oxoprolinase subunit A (Campylobacter jejuni subsp. doylei (strain ATCC BAA-1458 / RM4099 / 269.97)).